The chain runs to 168 residues: CASP-like protein UU-1 (168 aa).

The Cytoplasmic segment spans residues 1–17 (MVELESQEAVTVASTAD). The chain crosses the membrane as a helical span at residues 18–38 (IAVDVSLRLLAAATSLAAAVV). Residues 39–54 (VAANHQQRWGIRVDFT) are Extracellular-facing. Residues 55–75 (LFQVWIGFVAVNLVCTVYAAA) form a helical membrane-spanning segment. The Cytoplasmic segment spans residues 76-95 (TAAAAARKAMGRWWLHHADA). A helical membrane pass occupies residues 96–116 (VVVNLEAAATAGAGAIGSIAM). Residues 117 to 136 (WGNEASGWYAVCRLYRRYCN) lie on the Extracellular side of the membrane. The helical transmembrane segment at 137–157 (AGAAALALSLAAVLLLGVACA) threads the bilayer. Residues 158-168 (RSRYPKMPPTT) are Cytoplasmic-facing.

It belongs to the Casparian strip membrane proteins (CASP) family. As to quaternary structure, homodimer and heterodimers.

It is found in the cell membrane. This is CASP-like protein UU-1 from Oryza sativa subsp. japonica (Rice).